The primary structure comprises 130 residues: Phosphoribosyl-AMP cyclohydrolase (130 aa).

Position 77 (aspartate 77) interacts with Mg(2+). Cysteine 78 contributes to the Zn(2+) binding site. The Mg(2+) site is built by aspartate 79 and aspartate 81. Residues cysteine 95 and cysteine 102 each coordinate Zn(2+).

This sequence belongs to the PRA-CH family. As to quaternary structure, homodimer. It depends on Mg(2+) as a cofactor. The cofactor is Zn(2+).

The protein resides in the cytoplasm. It carries out the reaction 1-(5-phospho-beta-D-ribosyl)-5'-AMP + H2O = 1-(5-phospho-beta-D-ribosyl)-5-[(5-phospho-beta-D-ribosylamino)methylideneamino]imidazole-4-carboxamide. It functions in the pathway amino-acid biosynthesis; L-histidine biosynthesis; L-histidine from 5-phospho-alpha-D-ribose 1-diphosphate: step 3/9. Its function is as follows. Catalyzes the hydrolysis of the adenine ring of phosphoribosyl-AMP. In Pseudomonas savastanoi pv. phaseolicola (strain 1448A / Race 6) (Pseudomonas syringae pv. phaseolicola (strain 1448A / Race 6)), this protein is Phosphoribosyl-AMP cyclohydrolase.